The chain runs to 94 residues: Small ribosomal subunit protein bS18 (94 aa).

Over residues 1–12 (MSEQNSRPQNSE) the composition is skewed to low complexity. The tract at residues 1–29 (MSEQNSRPQNSERPQRSRRPQGGPRRRRK) is disordered. Over residues 16–29 (RSRRPQGGPRRRRK) the composition is skewed to basic residues.

This sequence belongs to the bacterial ribosomal protein bS18 family. In terms of assembly, part of the 30S ribosomal subunit. Forms a tight heterodimer with protein bS6.

Binds as a heterodimer with protein bS6 to the central domain of the 16S rRNA, where it helps stabilize the platform of the 30S subunit. The polypeptide is Small ribosomal subunit protein bS18 (Leuconostoc mesenteroides subsp. mesenteroides (strain ATCC 8293 / DSM 20343 / BCRC 11652 / CCM 1803 / JCM 6124 / NCDO 523 / NBRC 100496 / NCIMB 8023 / NCTC 12954 / NRRL B-1118 / 37Y)).